We begin with the raw amino-acid sequence, 232 residues long: U-scoloptoxin(11)-Ssd2a (232 aa).

The N-terminal stretch at 1-21 (MFQFCLLILLLAPGRFFSALG) is a signal peptide. A propeptide spanning residues 22-32 (KPQETLTVENR) is cleaved from the precursor.

Contains 8 disulfide bonds. In terms of tissue distribution, expressed by the venom gland.

Its subcellular location is the secreted. In Scolopendra dehaani (Thai centipede), this protein is U-scoloptoxin(11)-Ssd2a.